We begin with the raw amino-acid sequence, 734 residues long: Casein kinase II subunit alpha'-interacting protein (734 aa).

Residues 608–654 (SLLPSTSSSTSSSSTTSSSSSVASASSDSSSSSSSSSSFSISSSSSP) form a disordered region. Residues 612–654 (STSSSTSSSSTTSSSSSVASASSDSSSSSSSSSSFSISSSSSP) show a composition bias toward low complexity.

In terms of assembly, interacts (via C-terminus) with CSNK2A2. Post-translationally, phosphorylated by CK2 (casein kinase II), specifically by complexes containing catalytic subunit CSNK2A2.

The protein localises to the nucleus. May play a role in chromatin regulation of male germ cells. The polypeptide is Casein kinase II subunit alpha'-interacting protein (Homo sapiens (Human)).